A 218-amino-acid chain; its full sequence is Uracil-DNA glycosylase (218 aa).

This sequence belongs to the uracil-DNA glycosylase (UDG) superfamily. UNG family. Homodimer. Interacts with protein OPG148. Component of the Uracil-DNA glycosylase(UDG)-OPG148-polymerase complex; OPG148 and UDG form a heterodimeric processivity factor that associates with OPG71 to form the processive polymerase holoenzyme.

The catalysed reaction is Hydrolyzes single-stranded DNA or mismatched double-stranded DNA and polynucleotides, releasing free uracil.. In terms of biological role, plays an essential role in viral replication as a component of the DNA polymerase processivity factor. Excises uracil residues from the DNA which can arise as a result of misincorporation of dUMP residues by DNA polymerase or due to deamination of cytosine. This chain is Uracil-DNA glycosylase (OPG116), found in Monkeypox virus.